Consider the following 456-residue polypeptide: Exodeoxyribonuclease 7 large subunit (456 aa).

The protein belongs to the XseA family. As to quaternary structure, heterooligomer composed of large and small subunits.

The protein localises to the cytoplasm. The catalysed reaction is Exonucleolytic cleavage in either 5'- to 3'- or 3'- to 5'-direction to yield nucleoside 5'-phosphates.. Its function is as follows. Bidirectionally degrades single-stranded DNA into large acid-insoluble oligonucleotides, which are then degraded further into small acid-soluble oligonucleotides. The protein is Exodeoxyribonuclease 7 large subunit of Shigella boydii serotype 18 (strain CDC 3083-94 / BS512).